The sequence spans 323 residues: HTH-type transcriptional activator CmpR (323 aa).

The 58-residue stretch at 4-61 folds into the HTH lysR-type domain; it reads LTLHQLKVFEAAARHSSFTRAAEELYLTQPTVSIQVKQLTKAVGLPLFEQIGKRLYLT. Residues 21–40 constitute a DNA-binding region (H-T-H motif); that stretch reads FTRAAEELYLTQPTVSIQVK. Residues 304-323 form a disordered region; sequence IPESTTTDPELDAPQPVVGV.

Belongs to the LysR transcriptional regulatory family.

The protein localises to the cytoplasm. Its function is as follows. Activates transcription of the cmpABCD operon under carbon dioxide-limited conditions. The polypeptide is HTH-type transcriptional activator CmpR (cmpR) (Synechococcus elongatus (strain ATCC 33912 / PCC 7942 / FACHB-805) (Anacystis nidulans R2)).